A 123-amino-acid polypeptide reads, in one-letter code: MMTKEQIIEAVKNMTVLELNELVKAIEEEFGVTAAAPVVVAGGAAAGGEAAAEKTEFDVILADAGAQKIKVIKVVREITGLGLKEAKDLVDNTPKPLKEAVSKEEAEEIKAKLEEVGAKVEVK.

Belongs to the bacterial ribosomal protein bL12 family. In terms of assembly, homodimer. Part of the ribosomal stalk of the 50S ribosomal subunit. Forms a multimeric L10(L12)X complex, where L10 forms an elongated spine to which 2 to 4 L12 dimers bind in a sequential fashion. Binds GTP-bound translation factors.

Its function is as follows. Forms part of the ribosomal stalk which helps the ribosome interact with GTP-bound translation factors. Is thus essential for accurate translation. This chain is Large ribosomal subunit protein bL12, found in Geobacillus thermodenitrificans (strain NG80-2).